The chain runs to 654 residues: Probable Xaa-Pro aminopeptidase P (654 aa).

Mn(2+)-binding residues include Asp449, Asp460, Glu558, and Glu572.

The protein belongs to the peptidase M24B family. The cofactor is Mn(2+).

It catalyses the reaction Release of any N-terminal amino acid, including proline, that is linked to proline, even from a dipeptide or tripeptide.. Catalyzes the removal of a penultimate prolyl residue from the N-termini of peptides. This chain is Probable Xaa-Pro aminopeptidase P (ampp), found in Neosartorya fischeri (strain ATCC 1020 / DSM 3700 / CBS 544.65 / FGSC A1164 / JCM 1740 / NRRL 181 / WB 181) (Aspergillus fischerianus).